A 251-amino-acid chain; its full sequence is 3-deoxy-manno-octulosonate cytidylyltransferase (251 aa).

It belongs to the KdsB family.

The protein resides in the cytoplasm. It carries out the reaction 3-deoxy-alpha-D-manno-oct-2-ulosonate + CTP = CMP-3-deoxy-beta-D-manno-octulosonate + diphosphate. It participates in nucleotide-sugar biosynthesis; CMP-3-deoxy-D-manno-octulosonate biosynthesis; CMP-3-deoxy-D-manno-octulosonate from 3-deoxy-D-manno-octulosonate and CTP: step 1/1. The protein operates within bacterial outer membrane biogenesis; lipopolysaccharide biosynthesis. Its function is as follows. Activates KDO (a required 8-carbon sugar) for incorporation into bacterial lipopolysaccharide in Gram-negative bacteria. This chain is 3-deoxy-manno-octulosonate cytidylyltransferase, found in Geotalea uraniireducens (strain Rf4) (Geobacter uraniireducens).